The chain runs to 233 residues: Large ribosomal subunit protein uL1 (233 aa).

The protein belongs to the universal ribosomal protein uL1 family. As to quaternary structure, part of the 50S ribosomal subunit.

Functionally, binds directly to 23S rRNA. The L1 stalk is quite mobile in the ribosome, and is involved in E site tRNA release. Protein L1 is also a translational repressor protein, it controls the translation of the L11 operon by binding to its mRNA. This chain is Large ribosomal subunit protein uL1, found in Vibrio campbellii (strain ATCC BAA-1116).